A 164-amino-acid polypeptide reads, in one-letter code: Peptidyl-prolyl cis-trans isomerase A-like 4D (164 aa).

The PPIase cyclophilin-type domain maps to 7–163 (FFEITRDGKP…KKITIADCGQ (157 aa)).

Belongs to the cyclophilin-type PPIase family. PPIase A subfamily.

The protein localises to the cytoplasm. The enzyme catalyses [protein]-peptidylproline (omega=180) = [protein]-peptidylproline (omega=0). Functionally, PPIases accelerate the folding of proteins. It catalyzes the cis-trans isomerization of proline imidic peptide bonds in oligopeptides. In Homo sapiens (Human), this protein is Peptidyl-prolyl cis-trans isomerase A-like 4D.